Consider the following 219-residue polypeptide: Thiamine-phosphate synthase (219 aa).

4-amino-2-methyl-5-(diphosphooxymethyl)pyrimidine-binding positions include 44–48 and asparagine 79; that span reads QFREK. Residues aspartate 80 and aspartate 99 each coordinate Mg(2+). Residue serine 117 participates in 4-amino-2-methyl-5-(diphosphooxymethyl)pyrimidine binding. Residue 143 to 145 coordinates 2-[(2R,5Z)-2-carboxy-4-methylthiazol-5(2H)-ylidene]ethyl phosphate; it reads TST. Residue lysine 146 participates in 4-amino-2-methyl-5-(diphosphooxymethyl)pyrimidine binding. 2-[(2R,5Z)-2-carboxy-4-methylthiazol-5(2H)-ylidene]ethyl phosphate contacts are provided by residues glycine 175 and 195–196; that span reads IS.

The protein belongs to the thiamine-phosphate synthase family. The cofactor is Mg(2+).

The catalysed reaction is 2-[(2R,5Z)-2-carboxy-4-methylthiazol-5(2H)-ylidene]ethyl phosphate + 4-amino-2-methyl-5-(diphosphooxymethyl)pyrimidine + 2 H(+) = thiamine phosphate + CO2 + diphosphate. The enzyme catalyses 2-(2-carboxy-4-methylthiazol-5-yl)ethyl phosphate + 4-amino-2-methyl-5-(diphosphooxymethyl)pyrimidine + 2 H(+) = thiamine phosphate + CO2 + diphosphate. It carries out the reaction 4-methyl-5-(2-phosphooxyethyl)-thiazole + 4-amino-2-methyl-5-(diphosphooxymethyl)pyrimidine + H(+) = thiamine phosphate + diphosphate. Its pathway is cofactor biosynthesis; thiamine diphosphate biosynthesis; thiamine phosphate from 4-amino-2-methyl-5-diphosphomethylpyrimidine and 4-methyl-5-(2-phosphoethyl)-thiazole: step 1/1. In terms of biological role, condenses 4-methyl-5-(beta-hydroxyethyl)thiazole monophosphate (THZ-P) and 2-methyl-4-amino-5-hydroxymethyl pyrimidine pyrophosphate (HMP-PP) to form thiamine monophosphate (TMP). The polypeptide is Thiamine-phosphate synthase (Bacillus cereus (strain 03BB102)).